The sequence spans 63 residues: Odorranain-B1 (63 aa).

The first 22 residues, Met-1–Cys-22, serve as a signal peptide directing secretion. A propeptide spanning residues Glu-23–Val-41 is cleaved from the precursor.

Belongs to the frog skin active peptide (FSAP) family. Brevinin subfamily. As to expression, expressed by the skin glands.

Its subcellular location is the secreted. In Odorrana hainanensis (Odor frog), this protein is Odorranain-B1.